Here is a 192-residue protein sequence, read N- to C-terminus: NF-kappa-B inhibitor-interacting Ras-like protein 1 (192 aa).

11 to 18 provides a ligand contact to GTP; that stretch reads GLLSVGKT. An Effector region motif is present at residues 35–43; it reads DCETMEDVY. The segment at 58-93 is interactions with NFKBIA and NFKBIB; the sequence is HLYDTRGLQEGVELPKHYFSFADGFVLVYSVNNLES. GTP-binding positions include 61 to 65 and 120 to 123; these read DTRGL and NKID. The interval 168–192 is disordered; it reads LSQPQSKSSFPLPGRKNKGNSSSEN.

It belongs to the small GTPase superfamily. Ras family. KappaB-Ras subfamily. In terms of assembly, interacts with both NF-kappa-B inhibitor alpha (NFKBIA) and beta (NFKBIB) in vitro. However, it probably only interacts with NFKBIB in vivo. Forms a complex with NFKBIB and NF-kappa-B heterodimer (p50/NFKB1 and p65/RELA). Also interacts with c-Rel (REL).

It localises to the cytoplasm. Atypical Ras-like protein that acts as a potent regulator of NF-kappa-B activity by preventing the degradation of NF-kappa-B inhibitor beta (NFKBIB) by most signals, explaining why NFKBIB is more resistant to degradation. May act by blocking phosphorylation of NFKBIB and mediating cytoplasmic retention of p65/RELA NF-kappa-B subunit. It is unclear whether it acts as a GTPase. Both GTP- and GDP-bound forms block phosphorylation of NFKBIB. The chain is NF-kappa-B inhibitor-interacting Ras-like protein 1 (NKIRAS1) from Macaca fascicularis (Crab-eating macaque).